A 267-amino-acid chain; its full sequence is Membrane-spanning 4-domains subfamily A member 10 (267 aa).

The Cytoplasmic portion of the chain corresponds to 1–56 (MAGQAPTAVPGSVTGEVSRWQNLGPAQPAQKVAQPQNLVPDGHLEKALEGSDLLQK). Residues 57-77 (LGGFHIAIAFAHLAFGGYLIS) form a helical membrane-spanning segment. The Extracellular segment spans residues 78–83 (TVKNLH). Residues 84–104 (LVVLKCWYPLWGTVSFLVAGM) traverse the membrane as a helical segment. Residues 105–118 (AAMTTVTFPKTSLK) lie on the Cytoplasmic side of the membrane. A helical transmembrane segment spans residues 119–139 (VLCVIANVISLFCALAGFFVI). Topologically, residues 140–168 (AKDLFLEGPFPWPIWRPYPEPTTYIQRLE) are extracellular. Residues 169 to 189 (LTLFCFTFLEIFLSGSTAITA) form a helical membrane-spanning segment. The Cytoplasmic portion of the chain corresponds to 190-267 (YRMKRLQAED…LHTGPRTLRK (78 aa)).

It belongs to the MS4A family. As to expression, expressed in thymus, kidney, colon, brain and testis. Expressed also by various hematopoietic and lymphoblastoid cell lines.

It localises to the membrane. Its function is as follows. May be involved in signal transduction as a component of a multimeric receptor complex. In Mus musculus (Mouse), this protein is Membrane-spanning 4-domains subfamily A member 10 (Ms4a10).